Reading from the N-terminus, the 169-residue chain is MTSSDKSLSHDVFVYGSFQEPSVVNLILECSPVMVPAQLHGYHVYRLKGRLHACISPSENGLINGKILTGLTDSQLENLDMIEGSEYVRKTVEVVLTDTSEKKQVETYVWANKDDPNLYGEWDFEEWRRLHMDKFIEASTKFIEWKKNPDGRSREEFEKFVFDDPPTAA.

15 to 20 (YGSFQE) provides a ligand contact to substrate. The active-site Proton acceptor is glutamate 83.

Belongs to the gamma-glutamylcyclotransferase family. As to expression, expressed in roots, leaves and stems.

Putative gamma-glutamylcyclotransferase. This chain is Protein AIG2 B, found in Arabidopsis thaliana (Mouse-ear cress).